A 70-amino-acid chain; its full sequence is Large ribosomal subunit protein bL31 (70 aa).

Zn(2+)-binding residues include Cys16, Cys18, Cys37, and Cys40.

This sequence belongs to the bacterial ribosomal protein bL31 family. Type A subfamily. In terms of assembly, part of the 50S ribosomal subunit. Requires Zn(2+) as cofactor.

Its function is as follows. Binds the 23S rRNA. The protein is Large ribosomal subunit protein bL31 of Haemophilus influenzae (strain PittEE).